The sequence spans 140 residues: Zinc finger SWIM domain-containing protein 7 (140 aa).

Residues 66–114 (YQVLGSSSKTYTCLASCHYCSCPAFAFSVLRKSDSILCKHLLAVYLSQV) form an SWIM-type zinc finger.

Belongs to the SWS1 family. As to quaternary structure, interacts with RAD51D and XRCC3; involved in homologous recombination repair. Interacts with SWSAP1; they form a functional complex involved in homologous recombination repair and stabilize each other. In terms of tissue distribution, expressed in ovary and testis.

It localises to the nucleus. Functionally, involved in early stages of the homologous recombination repair (HRR) pathway of double-stranded DNA breaks arising during DNA replication or induced by DNA-damaging agents. Required for meiotic progression, hence for fertility. The protein is Zinc finger SWIM domain-containing protein 7 (ZSWIM7) of Homo sapiens (Human).